The following is a 572-amino-acid chain: Glutathione hydrolase 1 (572 aa).

The first 22 residues, 1–22, serve as a signal peptide directing secretion; that stretch reads MSLVRTVTIVLFIIAFLQNAAA. Arginine 99 serves as a coordination point for L-glutamate. N-linked (GlcNAc...) asparagine glycans are attached at residues asparagine 171 and asparagine 222. The active-site Nucleophile is the threonine 368. L-glutamate-binding positions include threonine 386, asparagine 388, glutamate 407, aspartate 410, 440 to 441, and 461 to 462; these read SS and GG. Asparagine 505 carries an N-linked (GlcNAc...) asparagine glycan. The disordered stretch occupies residues 552 to 572; the sequence is GGRSELVAVSDPRKGGFPSGY.

This sequence belongs to the gamma-glutamyltransferase family. Expressed in embryo, roots and leaves. In mature plants, expression is restricted to vascular tissues of roots, leaves, flowers and siliques.

The protein resides in the secreted. Its subcellular location is the extracellular space. The protein localises to the apoplast. The catalysed reaction is an N-terminal (5-L-glutamyl)-[peptide] + an alpha-amino acid = 5-L-glutamyl amino acid + an N-terminal L-alpha-aminoacyl-[peptide]. It carries out the reaction glutathione + H2O = L-cysteinylglycine + L-glutamate. The enzyme catalyses an S-substituted glutathione + H2O = an S-substituted L-cysteinylglycine + L-glutamate. Its pathway is sulfur metabolism; glutathione metabolism. Its function is as follows. May play a role in preventing oxidative stress by metabolizing extracellular oxidized glutathione (GSSG). The polypeptide is Glutathione hydrolase 1 (GGT1) (Arabidopsis thaliana (Mouse-ear cress)).